The chain runs to 81 residues: Kappa-theraphotoxin-Gr2c (81 aa).

Residues M1 to A19 form the signal peptide. A propeptide spanning residues L20–R50 is cleaved from the precursor. 3 disulfides stabilise this stretch: C52-C66, C59-C71, and C65-C75.

It belongs to the neurotoxin 30 (phrixotoxin) family. Expressed by the venom gland.

The protein resides in the secreted. Its function is as follows. Inhibits sodium channels Nav1.1/SCN1A (IC(50)=5.7 uM), Nav1.2/SCN2A (IC(50)=12 uM), Nav1.4/SCN4A (IC(50)=4 uM), Nav1.6/SCN8A (IC(50)=6.6 uM), Nav1.7/SCN9A (IC(50)=13.6-1030 nM), potassium channels Kv11.1/KCNH2 (IC(50)=4.7 uM), as well as high-voltage-gated calcium channels Cav1.2/CACNA1C (IC(50)= nM). Also blocks mechanosensitive ion channels (also named stretch-activated channels or SACs) and the hypotonic cell swelling induced calcium increase associated with the activation of such channels. It can thus be useful in treating cardiac ventricular disturbances. Also induces analgesia in mammals. The protein is Kappa-theraphotoxin-Gr2c of Grammostola rosea (Chilean rose tarantula).